A 195-amino-acid polypeptide reads, in one-letter code: PRS fimbrial minor pilin protein (195 aa).

The signal sequence occupies residues 1–22 (MRLRFSVPLFFFGCVFVHGVFA). Cysteines 58 and 97 form a disulfide.

The protein belongs to the fimbrial protein family.

The protein localises to the secreted. The protein resides in the fimbrium. Its function is as follows. Fimbriae (also called pili), polar filaments radiating from the surface of the bacterium to a length of 0.5-1.5 micrometers and numbering 100-300 per cell, enable bacteria to colonize the epithelium of specific host organs. In terms of biological role, seems to anchor the pilus to the bacterial cell. In addition the stoichiometric relationship between PrsH and PrsA determines the pilus length. This chain is PRS fimbrial minor pilin protein (prsH), found in Escherichia coli.